The following is a 223-amino-acid chain: ATP phosphoribosyltransferase (223 aa).

This sequence belongs to the ATP phosphoribosyltransferase family. Short subfamily. Heteromultimer composed of HisG and HisZ subunits.

The protein resides in the cytoplasm. It carries out the reaction 1-(5-phospho-beta-D-ribosyl)-ATP + diphosphate = 5-phospho-alpha-D-ribose 1-diphosphate + ATP. It participates in amino-acid biosynthesis; L-histidine biosynthesis; L-histidine from 5-phospho-alpha-D-ribose 1-diphosphate: step 1/9. Catalyzes the condensation of ATP and 5-phosphoribose 1-diphosphate to form N'-(5'-phosphoribosyl)-ATP (PR-ATP). Has a crucial role in the pathway because the rate of histidine biosynthesis seems to be controlled primarily by regulation of HisG enzymatic activity. The chain is ATP phosphoribosyltransferase from Bordetella pertussis (strain Tohama I / ATCC BAA-589 / NCTC 13251).